The following is a 37-amino-acid chain: Small ribosomal subunit protein eS32 (37 aa).

This sequence belongs to the eukaryotic ribosomal protein eS32 family. In terms of assembly, part of the small ribosomal subunit.

The protein is Small ribosomal subunit protein eS32 of Pyrococcus furiosus (strain ATCC 43587 / DSM 3638 / JCM 8422 / Vc1).